Here is a 578-residue protein sequence, read N- to C-terminus: A-type ATP synthase subunit A (578 aa).

228–235 (GPFGSGKT) provides a ligand contact to ATP.

The protein belongs to the ATPase alpha/beta chains family. In terms of assembly, has multiple subunits with at least A(3), B(3), C, D, E, F, H, I and proteolipid K(x).

It is found in the cell membrane. It catalyses the reaction ATP + H2O + 4 H(+)(in) = ADP + phosphate + 5 H(+)(out). Produces ATP from ADP in the presence of a proton gradient across the membrane. The archaeal alpha chain is a catalytic subunit. In terms of biological role, component of the A-type ATP synthase that produces ATP from ADP in the presence of a proton gradient across the membrane. The A chain is the catalytic subunit. This chain is A-type ATP synthase subunit A, found in Methanosarcina barkeri.